The sequence spans 214 residues: MKIILLGAPGAGKGTQAQFIMNKFGIPQISTGDMFRAAIKAGTELGKQAKALMDEGKLVPDELTVALVKDRIAQADCTNGFLLDGFPRTIPQADALKDSGVKIDFVLEFDVPDEVIVERMSGRRVHQASGRSYHIVYNPPKVEGKDDVTGEDLIIRADDKPETVLDRLAVYHKQTSPLIDYYQAEAKAGNTQYFRLDGTQKVEEVSQELDKILG.

Residue 10-15 (GAGKGT) participates in ATP binding. The segment at 30 to 59 (STGDMFRAAIKAGTELGKQAKALMDEGKLV) is NMP. Residues Thr-31, Arg-36, 57–59 (KLV), 85–88 (GFPR), and Gln-92 contribute to the AMP site. The LID stretch occupies residues 122 to 159 (GRRVHQASGRSYHIVYNPPKVEGKDDVTGEDLIIRADD). Residues Arg-123 and 132 to 133 (SY) contribute to the ATP site. AMP contacts are provided by Arg-156 and Arg-167. ATP is bound at residue Gln-200.

This sequence belongs to the adenylate kinase family. As to quaternary structure, monomer.

The protein localises to the cytoplasm. It carries out the reaction AMP + ATP = 2 ADP. It functions in the pathway purine metabolism; AMP biosynthesis via salvage pathway; AMP from ADP: step 1/1. In terms of biological role, catalyzes the reversible transfer of the terminal phosphate group between ATP and AMP. Plays an important role in cellular energy homeostasis and in adenine nucleotide metabolism. It may be linked to the biosynthesis of lipopolysaccharide surface molecules, which are important for the pathogenesis of H.influenzae. The protein is Adenylate kinase of Haemophilus influenzae (strain ATCC 51907 / DSM 11121 / KW20 / Rd).